Reading from the N-terminus, the 304-residue chain is Probable 5-dehydro-4-deoxyglucarate dehydratase (304 aa).

Belongs to the DapA family.

The enzyme catalyses 5-dehydro-4-deoxy-D-glucarate + H(+) = 2,5-dioxopentanoate + CO2 + H2O. It participates in carbohydrate acid metabolism; D-glucarate degradation; 2,5-dioxopentanoate from D-glucarate: step 2/2. This Rhodococcus jostii (strain RHA1) protein is Probable 5-dehydro-4-deoxyglucarate dehydratase.